The following is a 173-amino-acid chain: Mesencephalic astrocyte-derived neurotrophic factor homolog (173 aa).

An N-terminal signal peptide occupies residues 1 to 22; sequence MNTSHIVLMICFIVGVGQTALA. Disulfide bonds link Cys28-Cys114, Cys31-Cys103, Cys61-Cys72, and Cys148-Cys151.

The protein belongs to the ARMET family.

It is found in the secreted. Required during the maturation of the embryonic nervous system for maintenance of neuronal and cuticular connectivity. Essential for maintenance of dopaminergic neurons and dopamine levels. This Drosophila virilis (Fruit fly) protein is Mesencephalic astrocyte-derived neurotrophic factor homolog.